The primary structure comprises 65 residues: Large ribosomal subunit protein uL29 (65 aa).

This sequence belongs to the universal ribosomal protein uL29 family.

This Lactobacillus helveticus (strain DPC 4571) protein is Large ribosomal subunit protein uL29.